The following is a 253-amino-acid chain: Precorrin-4 C(11)-methyltransferase (253 aa).

It belongs to the precorrin methyltransferase family.

The enzyme catalyses precorrin-4 + S-adenosyl-L-methionine = precorrin-5 + S-adenosyl-L-homocysteine. Its pathway is cofactor biosynthesis; adenosylcobalamin biosynthesis; cob(II)yrinate a,c-diamide from precorrin-2 (aerobic route): step 4/10. Functionally, catalyzes the methylation of C-11 in precorrin-4 to form precorrin-5. This Sinorhizobium sp protein is Precorrin-4 C(11)-methyltransferase (cobM).